The primary structure comprises 667 residues: DNA ligase (667 aa).

Residues 30-34 (DSEYD), 79-80 (SL), and Glu112 each bind NAD(+). Lys114 functions as the N6-AMP-lysine intermediate in the catalytic mechanism. Positions 135, 172, 289, and 313 each coordinate NAD(+). Residues Cys407, Cys410, Cys425, and Cys431 each contribute to the Zn(2+) site. The BRCT domain occupies 590–667 (VRDNPLKGKT…SENEFLALLA (78 aa)).

Belongs to the NAD-dependent DNA ligase family. LigA subfamily. Mg(2+) serves as cofactor. It depends on Mn(2+) as a cofactor.

It catalyses the reaction NAD(+) + (deoxyribonucleotide)n-3'-hydroxyl + 5'-phospho-(deoxyribonucleotide)m = (deoxyribonucleotide)n+m + AMP + beta-nicotinamide D-nucleotide.. In terms of biological role, DNA ligase that catalyzes the formation of phosphodiester linkages between 5'-phosphoryl and 3'-hydroxyl groups in double-stranded DNA using NAD as a coenzyme and as the energy source for the reaction. It is essential for DNA replication and repair of damaged DNA. This Histophilus somni (strain 2336) (Haemophilus somnus) protein is DNA ligase.